We begin with the raw amino-acid sequence, 72 residues long: MDGKAPAAFVEPGEFNEVMKRLDKIDEKIEFVNSEVAQKIGKKVGRDIGILYGGFIGLLLFLIYTVVSSMFM.

A helical membrane pass occupies residues 48-68 (IGILYGGFIGLLLFLIYTVVS).

This sequence belongs to the MtrG family. As to quaternary structure, the complex is composed of 8 subunits; MtrA, MtrB, MtrC, MtrD, MtrE, MtrF, MtrG and MtrH.

The protein localises to the cell membrane. It carries out the reaction 5-methyl-5,6,7,8-tetrahydromethanopterin + coenzyme M + 2 Na(+)(in) = 5,6,7,8-tetrahydromethanopterin + methyl-coenzyme M + 2 Na(+)(out). It functions in the pathway one-carbon metabolism; methanogenesis from CO(2); methyl-coenzyme M from 5,10-methylene-5,6,7,8-tetrahydromethanopterin: step 2/2. In terms of biological role, part of a complex that catalyzes the formation of methyl-coenzyme M and tetrahydromethanopterin from coenzyme M and methyl-tetrahydromethanopterin. This is an energy-conserving, sodium-ion translocating step. The polypeptide is Tetrahydromethanopterin S-methyltransferase subunit G (Methanosarcina barkeri (strain Fusaro / DSM 804)).